The following is a 233-amino-acid chain: Type IV secretion system protein PtlE homolog (233 aa).

The helical transmembrane segment at 42–62 (VAWAALAVTALSLIAIATMLP) threads the bilayer.

The protein belongs to the virB8 family.

Its subcellular location is the cell inner membrane. In Bordetella bronchiseptica (strain ATCC BAA-588 / NCTC 13252 / RB50) (Alcaligenes bronchisepticus), this protein is Type IV secretion system protein PtlE homolog (ptlE).